The sequence spans 359 residues: MTIKIAIDCMGGDHGVSVTVPAAISFLSRHDDAEMVLVGLPDAIRTQLKKLHALDHPRVTIVEATEVITMDDPVEVALRKKRDSSMRVAVTQVKEGLAGACISAGNTGALMAVSRYVLKTLEGIERPAIATTIPNEQGWGTTVLDLGANADCEPEHLLQFARMAEAMVAVVDHKEHPTVGLLNIGEEVIKGNEVVKRAGELLRASELNFYGNVEGNDIFKGTTDIVVCDGFVGNVALKSTEGLAKMIGSMIKEEFTRSWFTKLLAAVAMPVLSRLARRLDPARYNGASLLGLRGLVIKSHGSADAHSFEWAIKRGYDAAKNGVIARITRAFADKSSAAGAAQPAPETEVPGAHPSPHVA.

The tract at residues 337 to 359 (AAGAAQPAPETEVPGAHPSPHVA) is disordered.

It belongs to the PlsX family. Homodimer. Probably interacts with PlsY.

Its subcellular location is the cytoplasm. The catalysed reaction is a fatty acyl-[ACP] + phosphate = an acyl phosphate + holo-[ACP]. The protein operates within lipid metabolism; phospholipid metabolism. Catalyzes the reversible formation of acyl-phosphate (acyl-PO(4)) from acyl-[acyl-carrier-protein] (acyl-ACP). This enzyme utilizes acyl-ACP as fatty acyl donor, but not acyl-CoA. This Cupriavidus necator (strain ATCC 17699 / DSM 428 / KCTC 22496 / NCIMB 10442 / H16 / Stanier 337) (Ralstonia eutropha) protein is Phosphate acyltransferase.